A 422-amino-acid polypeptide reads, in one-letter code: UDP-N-acetylglucosamine 1-carboxyvinyltransferase (422 aa).

22–23 is a binding site for phosphoenolpyruvate; it reads KN. UDP-N-acetyl-alpha-D-glucosamine is bound at residue Arg-95. The active-site Proton donor is the Cys-119. Cys-119 is subject to 2-(S-cysteinyl)pyruvic acid O-phosphothioketal. UDP-N-acetyl-alpha-D-glucosamine is bound by residues 124-128, Asp-309, and Val-331; that span reads RPIDQ.

Belongs to the EPSP synthase family. MurA subfamily.

The protein resides in the cytoplasm. The enzyme catalyses phosphoenolpyruvate + UDP-N-acetyl-alpha-D-glucosamine = UDP-N-acetyl-3-O-(1-carboxyvinyl)-alpha-D-glucosamine + phosphate. It participates in cell wall biogenesis; peptidoglycan biosynthesis. Functionally, cell wall formation. Adds enolpyruvyl to UDP-N-acetylglucosamine. This Anaeromyxobacter dehalogenans (strain 2CP-C) protein is UDP-N-acetylglucosamine 1-carboxyvinyltransferase.